The following is a 271-amino-acid chain: Mannosyl-3-phosphoglycerate phosphatase (271 aa).

Asp-13 serves as the catalytic Nucleophile. Asp-13, Asp-15, and Asp-214 together coordinate Mg(2+).

It belongs to the HAD-like hydrolase superfamily. MPGP family. Mg(2+) serves as cofactor.

The protein resides in the cytoplasm. The enzyme catalyses 2-O-(alpha-D-mannosyl)-3-phosphoglycerate + H2O = (2R)-2-O-(alpha-D-mannosyl)-glycerate + phosphate. The sequence is that of Mannosyl-3-phosphoglycerate phosphatase from Escherichia coli O139:H28 (strain E24377A / ETEC).